We begin with the raw amino-acid sequence, 828 residues long: Glycerol-3-phosphate acyltransferase (828 aa).

The short motif at C309–I314 is the HXXXXD motif element.

Belongs to the GPAT/DAPAT family.

Its subcellular location is the cell inner membrane. It carries out the reaction sn-glycerol 3-phosphate + an acyl-CoA = a 1-acyl-sn-glycero-3-phosphate + CoA. The protein operates within phospholipid metabolism; CDP-diacylglycerol biosynthesis; CDP-diacylglycerol from sn-glycerol 3-phosphate: step 1/3. This is Glycerol-3-phosphate acyltransferase from Pseudomonas entomophila (strain L48).